We begin with the raw amino-acid sequence, 296 residues long: 2-dehydropantoate 2-reductase (296 aa).

NADP(+)-binding positions include 7 to 12 (GPGAVG), N94, and A120. Position 94 (N94) interacts with substrate. The active-site Proton donor is the K175. Residues N179, N183, N193, and S245 each coordinate substrate. An NADP(+)-binding site is contributed by E257.

The protein belongs to the ketopantoate reductase family.

It is found in the cytoplasm. The enzyme catalyses (R)-pantoate + NADP(+) = 2-dehydropantoate + NADPH + H(+). The protein operates within cofactor biosynthesis; (R)-pantothenate biosynthesis; (R)-pantoate from 3-methyl-2-oxobutanoate: step 2/2. Catalyzes the NADPH-dependent reduction of ketopantoate into pantoic acid. This Vibrio cholerae serotype O1 (strain ATCC 39315 / El Tor Inaba N16961) protein is 2-dehydropantoate 2-reductase (panE).